Here is an 824-residue protein sequence, read N- to C-terminus: Dapper 1-B (824 aa).

3 disordered regions span residues 1–33 (MKPI…RQRT), 131–150 (EEHL…LSDG), and 515–534 (HASS…EGSS). Residues 2-343 (KPIPAAPEPL…PVRTNKPRTS (342 aa)) are interaction with tcf7l1-A. Basic and acidic residues predominate over residues 16 to 33 (DSPRRKDKGEAESERQRT). Positions 84–139 (EEKFLEDNILLLKKQLNCLRKRDAGLLSQLHELDKQINDLRIDVEKTEEHLETDSR) form a coiled coil. A compositionally biased stretch (basic and acidic residues) spans 520–530 (FDERPPLDFKS). The PDZ-binding motif lies at 821–824 (MTTV).

It belongs to the dapper family. As to quaternary structure, interacts with dbf4 and tcf7l1-A. Interacts with dvl2/dsh; the interaction is required for dact1-b phosphorylation by CaMK1D and seems to become disrupted by the phosphorylation. Post-translationally, phosphorylated by CaMK1D; the phosphorylation requires binding to dvl2/dsh. As to expression, expressed both in the dorsal lip in early gastrula and throughout the posterior presumptive ectoderm in early neurula. Expressed in the dorsal neural folds at the tailbud stage and highly expressed in the tadpole head, including the brain, retina and cartilaginous branchial arch derivatives.

The protein resides in the cytoplasm. Its subcellular location is the nucleus. Functionally, involved in regulation of intracellular signaling pathways during development. Specifically thought to play a role in canonical and/or non-canonical Wnt signaling pathways through interaction with DSH (Dishevelled) family proteins. Binds to dvl2 to regulate the degradation of beta-catenin (ctnnb1-A and possibly ctnnb1-B), thereby modulating the transcriptional activation of target genes of the Wnt signaling pathway. Seems to promote beta-catenin degradation if not phosphorylated and to block beta-catenin degradation if phosphorylated by CaMK1D. Involved in regulation of catenin delta/ctnnd1 protein level. May also bind to and directly stimulate the activity of tcf7l1-A. Also regulates the activation by dvl2 of jnk, a component of ctnnb1/beta-catenin-independent frizzled signaling. Required for notochord and head formation. In Xenopus laevis (African clawed frog), this protein is Dapper 1-B (dact1-b).